A 238-amino-acid polypeptide reads, in one-letter code: MNDHKPPIEEFMGLSFNMSTVLMTTIACLIVFLITFIGTRRLSMNPSGLQNFLEWVVDFIRGIIKANMDWKVGGRFIVLAYALLFYVFVANMLGLPFELYNPTTHEVWWKSPTSDPVLTLTMAAFVVILTHYYGIKIQGFGKYLKGYITPVPFLLPFKIIEEFANTLTLGMRLFGNVYAKEILMILLVTAGTSGLIGMFGAFLPLIVWQAFGLFIGAIQAYIFAMLAMVYMAHKVESH.

A run of 5 helical transmembrane segments spans residues 18–38 (MSTV…TFIG), 76–96 (FIVL…LGLP), 117–137 (VLTL…GIKI), 195–215 (LIGM…GLFI), and 216–236 (GAIQ…HKVE).

Belongs to the ATPase A chain family. F-type ATPases have 2 components, CF(1) - the catalytic core - and CF(0) - the membrane proton channel. CF(1) has five subunits: alpha(3), beta(3), gamma(1), delta(1), epsilon(1). CF(0) has three main subunits: a(1), b(2) and c(9-12). The alpha and beta chains form an alternating ring which encloses part of the gamma chain. CF(1) is attached to CF(0) by a central stalk formed by the gamma and epsilon chains, while a peripheral stalk is formed by the delta and b chains.

The protein localises to the cell membrane. In terms of biological role, key component of the proton channel; it plays a direct role in the translocation of protons across the membrane. This Alkalihalophilus pseudofirmus (strain ATCC BAA-2126 / JCM 17055 / OF4) (Bacillus pseudofirmus) protein is ATP synthase subunit a.